Consider the following 856-residue polypeptide: Phospholipase D gamma 2 (856 aa).

Residues 21–161 (PLATSSGSLM…CSGNRIEGLF (141 aa)) form the C2 domain. Asp223 contacts Ca(2+). The 36-residue stretch at 362–397 (TIYTHHQKTMIVDAEAAQNRRKIVAFVGGLDLCNGR) folds into the PLD phosphodiesterase 1 domain. Residues His367, Lys369, and Asp374 contribute to the active site. His367 is a binding site for a 1,2-diacyl-sn-glycero-3-phosphate. Ca(2+) is bound by residues His403 and His435. A 1,2-diacyl-sn-glycero-3-phosphate contacts are provided by Gln562 and His707. One can recognise a PLD phosphodiesterase 2 domain in the interval 702–729 (FMIYVHSKGMVVDDEFVLIGSANINQRS). Active-site residues include His707, Lys709, and Asp714. Position 770 (Glu770) interacts with Ca(2+).

This sequence belongs to the phospholipase D family. C2-PLD subfamily. It depends on Ca(2+) as a cofactor. In terms of tissue distribution, highly expressed in roots and flowers, moderately in stems, leaves and seedlings and low in siliques. Not detected in seeds.

It is found in the cytoplasm. It localises to the membrane. It catalyses the reaction a 1,2-diacyl-sn-glycero-3-phosphocholine + H2O = a 1,2-diacyl-sn-glycero-3-phosphate + choline + H(+). Inhibited by neomycin. In terms of biological role, hydrolyzes glycerol-phospholipids at the terminal phosphodiesteric bond to generate phosphatidic acids (PA). Plays an important role in various cellular processes, including phytohormone action, vesicular trafficking, secretion, cytoskeletal arrangement, meiosis, tumor promotion, pathogenesis, membrane deterioration and senescence. Can use phosphatidylserine but prefers ethanolamine-containing lipids as substrates. Can use phosphatidylcholine (PC) as substrates in the presence of phosphatidylethanolamine (PE) and PIP2. Involved in membrane lipid modulation under aluminum (Al) stress and negatively modulate plant tolerance to Al. The chain is Phospholipase D gamma 2 from Arabidopsis thaliana (Mouse-ear cress).